The sequence spans 94 residues: ATP-dependent Clp protease adapter protein ClpS (94 aa).

It belongs to the ClpS family. In terms of assembly, binds to the N-terminal domain of the chaperone ClpA.

Functionally, involved in the modulation of the specificity of the ClpAP-mediated ATP-dependent protein degradation. The chain is ATP-dependent Clp protease adapter protein ClpS from Thermosynechococcus vestitus (strain NIES-2133 / IAM M-273 / BP-1).